Consider the following 213-residue polypeptide: MDPGAGAFSEEQFREACAELQRPALSGAAWELLVETQGISVYRLLDQQTGLYAYKVFGVLEDCLPDLLADVYMDLAYRKQWDQYVKELYEKECSGETVVYWQVKYPFPMSNRDYVYVRQRQELDFEGQKVHVILAQSTSEPQFPEKSGVIRVKHYKQRLAIQSDGKRGSKVFMYYFDNPGGQIPSWVINWAAKNGVPNFLKDMVKACQNYKKT.

At M1 the chain carries N-acetylmethionine. The START domain occupies 1–212; that stretch reads MDPGAGAFSE…MVKACQNYKK (212 aa). Residues Y72 and R78 each coordinate a 1,2-diacyl-sn-glycero-3-phosphocholine. A Phosphoserine modification is found at S139. Residue Q157 coordinates a 1,2-diacyl-sn-glycero-3-phosphocholine. The interval 171-176 is part of the binding site for phosphatidylcholine; that stretch reads VFMYYF.

Interacts with ACOT13/THEM2.

The protein resides in the cytoplasm. In terms of biological role, catalyzes the transfer of phosphatidylcholine between membranes. Binds phosphatidylcholine in a tight 1:1 stoichiometric complex. The chain is Phosphatidylcholine transfer protein (PCTP) from Bos taurus (Bovine).